A 112-amino-acid polypeptide reads, in one-letter code: UPF0342 protein SPP_1392 (112 aa).

Belongs to the UPF0342 family.

In Streptococcus pneumoniae (strain P1031), this protein is UPF0342 protein SPP_1392.